We begin with the raw amino-acid sequence, 183 residues long: Mitochondrial import inner membrane translocase subunit tim17 (183 aa).

Helical transmembrane passes span 13 to 33 (AGGAFAIGYVLMGVVNIGLGF), 57 to 77 (GGNFAIWGSLFSGFDCTLSYI), and 107 to 127 (VQAAAFGGIFIGIIEAFQHMM). Residues 131-141 (MQAQQEEMTQQ) show a composition bias toward polar residues. Residues 131–183 (MQAQQEEMTQQHLEERKRYEEERKQREGERKKLNENGKSKKNKQQQNGENDLD) are disordered. The segment covering 142–168 (HLEERKRYEEERKQREGERKKLNENGK) has biased composition (basic and acidic residues). Over residues 174 to 183 (QQQNGENDLD) the composition is skewed to low complexity.

It belongs to the Tim17/Tim22/Tim23 family.

It localises to the mitochondrion inner membrane. Functionally, may be involved in the translocation of transit peptide-containing proteins across the mitochondrial inner membrane. This is Mitochondrial import inner membrane translocase subunit tim17 (timm17) from Dictyostelium discoideum (Social amoeba).